Consider the following 50-residue polypeptide: Bacteriocin-like protein SboX (50 aa).

This Bacillus subtilis (strain 168) protein is Bacteriocin-like protein SboX (sboX).